The following is a 295-amino-acid chain: Small ribosomal subunit biogenesis GTPase RsgA (295 aa).

A CP-type G domain is found at 68–228; that stretch reads KNLLTKPHVA…VVDTPGFANL (161 aa). GTP contacts are provided by residues 117–120 and 170–178; these read NKMD and GLSGVGKSS. Zn(2+) is bound by residues C250, C255, H257, and C263.

Belongs to the TRAFAC class YlqF/YawG GTPase family. RsgA subfamily. In terms of assembly, monomer. Associates with 30S ribosomal subunit, binds 16S rRNA. It depends on Zn(2+) as a cofactor.

The protein resides in the cytoplasm. Its function is as follows. One of several proteins that assist in the late maturation steps of the functional core of the 30S ribosomal subunit. Helps release RbfA from mature subunits. May play a role in the assembly of ribosomal proteins into the subunit. Circularly permuted GTPase that catalyzes slow GTP hydrolysis, GTPase activity is stimulated by the 30S ribosomal subunit. This is Small ribosomal subunit biogenesis GTPase RsgA from Thermotoga petrophila (strain ATCC BAA-488 / DSM 13995 / JCM 10881 / RKU-1).